Reading from the N-terminus, the 440-residue chain is Chromosomal replication initiator protein DnaA (440 aa).

Positions Met-1 to Asn-74 are domain I, interacts with DnaA modulators. A domain II region spans residues Asn-74 to Thr-99. The interval Ile-100–Ala-316 is domain III, AAA+ region. Residues Gly-146, Gly-148, Lys-149, and Thr-150 each contribute to the ATP site. The segment at Thr-317 to Ser-440 is domain IV, binds dsDNA.

This sequence belongs to the DnaA family. Oligomerizes as a right-handed, spiral filament on DNA at oriC.

Its subcellular location is the cytoplasm. In terms of biological role, plays an essential role in the initiation and regulation of chromosomal replication. ATP-DnaA binds to the origin of replication (oriC) to initiate formation of the DNA replication initiation complex once per cell cycle. Binds the DnaA box (a 9 base pair repeat at the origin) and separates the double-stranded (ds)DNA. Forms a right-handed helical filament on oriC DNA; dsDNA binds to the exterior of the filament while single-stranded (ss)DNA is stabiized in the filament's interior. The ATP-DnaA-oriC complex binds and stabilizes one strand of the AT-rich DNA unwinding element (DUE), permitting loading of DNA polymerase. After initiation quickly degrades to an ADP-DnaA complex that is not apt for DNA replication. Binds acidic phospholipids. The sequence is that of Chromosomal replication initiator protein DnaA from Campylobacter jejuni subsp. jejuni serotype O:2 (strain ATCC 700819 / NCTC 11168).